The chain runs to 210 residues: Holliday junction branch migration complex subunit RuvA (210 aa).

The interval 1–70 is domain I; it reads MISYLKGNPI…DEQPILYGFA (70 aa). Residues 71 to 149 are domain II; the sequence is TAAERELFRQ…QWRKLVGITL (79 aa). Residues 150–160 are flexible linker; the sequence is PSTSAIPSLEV. The tract at residues 160–210 is domain III; that stretch reads VLEDVEMTLLALGYTNEEINKAISTLSQDNQMLKNTNSEEWIREAIAWLSQ.

It belongs to the RuvA family. Homotetramer. Forms an RuvA(8)-RuvB(12)-Holliday junction (HJ) complex. HJ DNA is sandwiched between 2 RuvA tetramers; dsDNA enters through RuvA and exits via RuvB. An RuvB hexamer assembles on each DNA strand where it exits the tetramer. Each RuvB hexamer is contacted by two RuvA subunits (via domain III) on 2 adjacent RuvB subunits; this complex drives branch migration. In the full resolvosome a probable DNA-RuvA(4)-RuvB(12)-RuvC(2) complex forms which resolves the HJ.

The protein resides in the cytoplasm. Its function is as follows. The RuvA-RuvB-RuvC complex processes Holliday junction (HJ) DNA during genetic recombination and DNA repair, while the RuvA-RuvB complex plays an important role in the rescue of blocked DNA replication forks via replication fork reversal (RFR). RuvA specifically binds to HJ cruciform DNA, conferring on it an open structure. The RuvB hexamer acts as an ATP-dependent pump, pulling dsDNA into and through the RuvAB complex. HJ branch migration allows RuvC to scan DNA until it finds its consensus sequence, where it cleaves and resolves the cruciform DNA. This is Holliday junction branch migration complex subunit RuvA from Rippkaea orientalis (strain PCC 8801 / RF-1) (Cyanothece sp. (strain PCC 8801)).